Here is a 165-residue protein sequence, read N- to C-terminus: REP-associated tyrosine transposase (165 aa).

Belongs to the transposase 17 family. RAYT subfamily. Monomer.

Its activity is regulated as follows. Cleavage occurs in the presence of magnesium, but is much more pronounced with manganese. Functionally, transposase that is always flanked by repeated extragenic palindrome (REP) sequences, which are clustered in structures called bacterial interspersed mosaic elements (BIMEs). RayT catalyzes cleavage and recombination of BIMEs. Binds REP sequences and cleaves BIMEs both upstream and downstream of the REP sequence. Could be important in the creation of BIME variability and amplification. The chain is REP-associated tyrosine transposase from Escherichia coli (strain K12).